The chain runs to 173 residues: Small ribosomal subunit protein uS11m (173 aa).

Belongs to the universal ribosomal protein uS11 family.

It localises to the mitochondrion. In Acanthamoeba castellanii (Amoeba), this protein is Small ribosomal subunit protein uS11m (RPS11).